The sequence spans 1249 residues: Minor capsid protein M1249L (1249 aa).

It belongs to the asfivirus M1249L family. Interacts with the minor capsid protein p17 and with the hexon capsid protein p72 capsomers; these interactions form a rigid zipper structure that stabilizes the capsomers. Interacts with host IRF3.

The protein resides in the virion. Its subcellular location is the host cytoplasm. Its function is as follows. Together with the penton and the other minor capsid proteins (p17, p49), forms a complicated network immediately below the outer capsid shell, stabilizing the whole capsid. In addition, blocks IFN-beta transactivation mediated by the cGAS-STING pathway and regulates the transcriptional activity of IFN-beta. Mechanistically, suppresses the phosphorylation of host key adapter protein TBK1 and degrades host IRF3 in the cytoplasm. In Ornithodoros (relapsing fever ticks), this protein is Minor capsid protein M1249L.